The chain runs to 431 residues: 23S rRNA (uracil(1939)-C(5))-methyltransferase RlmD (431 aa).

In terms of domain architecture, TRAM spans 10–68; sequence RVTTRQIITVKVNDLDSFGQGVARHNGKALFIPGLLPEESAEVIITEDKKQFARARVSR. [4Fe-4S] cluster-binding residues include cysteine 81, cysteine 87, cysteine 90, and cysteine 161. S-adenosyl-L-methionine contacts are provided by glutamine 264, phenylalanine 293, asparagine 298, glutamate 314, asparagine 341, and aspartate 362. Residue cysteine 388 is the Nucleophile of the active site.

It belongs to the class I-like SAM-binding methyltransferase superfamily. RNA M5U methyltransferase family. RlmD subfamily.

The catalysed reaction is uridine(1939) in 23S rRNA + S-adenosyl-L-methionine = 5-methyluridine(1939) in 23S rRNA + S-adenosyl-L-homocysteine + H(+). In terms of biological role, catalyzes the formation of 5-methyl-uridine at position 1939 (m5U1939) in 23S rRNA. The polypeptide is 23S rRNA (uracil(1939)-C(5))-methyltransferase RlmD (Salmonella typhimurium (strain LT2 / SGSC1412 / ATCC 700720)).